Consider the following 141-residue polypeptide: ATP synthase epsilon chain (141 aa).

The protein belongs to the ATPase epsilon chain family. As to quaternary structure, F-type ATPases have 2 components, CF(1) - the catalytic core - and CF(0) - the membrane proton channel. CF(1) has five subunits: alpha(3), beta(3), gamma(1), delta(1), epsilon(1). CF(0) has three main subunits: a, b and c.

Its subcellular location is the cell inner membrane. In terms of biological role, produces ATP from ADP in the presence of a proton gradient across the membrane. This chain is ATP synthase epsilon chain, found in Gluconacetobacter diazotrophicus (strain ATCC 49037 / DSM 5601 / CCUG 37298 / CIP 103539 / LMG 7603 / PAl5).